The following is an 87-amino-acid chain: Spermatid-specific protein S1 (87 aa).

A disordered region spans residues 1–36; sequence TKSRYRNRRSRPRRRYGRRMRKTRCRRKGRRISRRP.

It localises to the nucleus. Its subcellular location is the chromosome. Its function is as follows. Involved in nuclear basic protein transition: histones are replaced by spermatid specific proteins which are themselves replaced by protamines in late spermatids. The sequence is that of Spermatid-specific protein S1 from Scyliorhinus canicula (Small-spotted catshark).